Consider the following 59-residue polypeptide: MGLFSSINTASTGLTAQRLRLDVIANNIANVETTRTSEGGSYRRQRVIFAPRVVSPYWK.

This sequence belongs to the flagella basal body rod proteins family. As to quaternary structure, the basal body constitutes a major portion of the flagellar organelle and consists of four rings (L,P,S, and M) mounted on a central rod. The rod consists of about 26 subunits of FlgG in the distal portion, and FlgB, FlgC and FlgF are thought to build up the proximal portion of the rod with about 6 subunits each.

The protein resides in the bacterial flagellum basal body. This Borrelia hermsii protein is Flagellar basal-body rod protein FlgC (flgC).